The primary structure comprises 153 residues: Lectin-like protein EP153R (153 aa).

Topologically, residues 1–30 are cytoplasmic; the sequence is MYFKKKYIGLIDKNCEKKILDDSSTIKICY. The chain crosses the membrane as a helical span at residues 31–51; it reads ILIGILIGTNMITLIYNFIFW. Over 52–153 the chain is Extracellular; it reads DNYIKCYRNN…YTDLLFICGK (102 aa). Cys67 and Cys78 are oxidised to a cystine. N-linked (GlcNAc...) asparagine; by host glycans are attached at residues Asn83, Asn89, Asn101, Asn107, Asn113, Asn120, Asn127, and Asn143. A disulfide bridge connects residues Cys97 and Cys151.

It belongs to the asfivirus lectin-like protein family. Homodimer.

It is found in the host endoplasmic reticulum membrane. In terms of biological role, down-regulates MHC-I expression by impairing the appropriate configuration or presentation into the plasma membrane of the latter. Participates in viral hemadsorption, which may help viral spread. Reduces the transactivating activity of host TP53, thus inhibiting apoptosis. Non-essential for virus growth in swine macrophage cell cultures. This African swine fever virus (strain Badajoz 1971 Vero-adapted) (Ba71V) protein is Lectin-like protein EP153R.